Reading from the N-terminus, the 169-residue chain is uncharacterized protein (169 aa).

This is an uncharacterized protein from Saccharomyces cerevisiae (strain ATCC 204508 / S288c) (Baker's yeast).